The sequence spans 505 residues: Protein phosphatase 1J (505 aa).

The interval 1-103 (MLNRVRSAVA…PPDTGRRLPW (103 aa)) is disordered. Residues 27 to 50 (DLPNAASAPPAAAPEAPRSPPAKA) are compositionally biased toward low complexity. Residues Ser-66 and Ser-76 each carry the phosphoserine modification. The 395-residue stretch at 104–498 (STGYAEVINA…DDISVFVIPL (395 aa)) folds into the PPM-type phosphatase domain.

Belongs to the PP2C family. In terms of assembly, interacts with UBE2I/UBC9.

The catalysed reaction is O-phospho-L-seryl-[protein] + H2O = L-seryl-[protein] + phosphate. It carries out the reaction O-phospho-L-threonyl-[protein] + H2O = L-threonyl-[protein] + phosphate. This is Protein phosphatase 1J (PPM1J) from Homo sapiens (Human).